A 225-amino-acid polypeptide reads, in one-letter code: uncharacterized protein (225 aa).

A divalent metal cation is bound by residues Glu-69, Glu-71, and Asp-100.

It belongs to the FAH family.

This is an uncharacterized protein from Pyrococcus abyssi (strain GE5 / Orsay).